The chain runs to 441 residues: Homoserine dehydrogenase (441 aa).

NADP(+) contacts are provided by Asn-17 and Val-18. 2 residues coordinate NAD(+): Val-18 and Gly-47. Residue Val-18 coordinates NADPH. Residues Arg-49, Arg-50, and Lys-107 each contribute to the NADP(+) site. Arg-49 contacts NADPH. Lys-107 provides a ligand contact to NADPH. 4 residues coordinate Na(+): Glu-131, Val-134, Gly-136, and Ile-138. NADP(+) contacts are provided by Gly-189 and Glu-192. L-homoserine contacts are provided by Glu-192 and Asp-203. Lys-207 serves as the catalytic Proton donor. Gly-309 is a binding site for NADP(+). Gly-309 serves as a coordination point for NAD(+). Residue Gly-309 participates in NADPH binding. Residues 356 to 435 form the ACT domain; that stretch reads YVSMNVADKP…VVQGVTSVLR (80 aa).

Belongs to the homoserine dehydrogenase family. Requires a metal cation as cofactor.

It catalyses the reaction L-homoserine + NADP(+) = L-aspartate 4-semialdehyde + NADPH + H(+). The catalysed reaction is L-homoserine + NAD(+) = L-aspartate 4-semialdehyde + NADH + H(+). It participates in amino-acid biosynthesis; L-methionine biosynthesis via de novo pathway; L-homoserine from L-aspartate: step 3/3. It functions in the pathway amino-acid biosynthesis; L-threonine biosynthesis; L-threonine from L-aspartate: step 3/5. Catalyzes the conversion of L-aspartate-beta-semialdehyde (L-Asa) to L-homoserine (L-Hse), the third step in the biosynthesis of threonine and methionine from aspartate. The sequence is that of Homoserine dehydrogenase (hom) from Mycobacterium leprae (strain TN).